The chain runs to 142 residues: Large ribosomal subunit protein uL11 (142 aa).

It belongs to the universal ribosomal protein uL11 family. As to quaternary structure, part of the ribosomal stalk of the 50S ribosomal subunit. Interacts with L10 and the large rRNA to form the base of the stalk. L10 forms an elongated spine to which L12 dimers bind in a sequential fashion forming a multimeric L10(L12)X complex. In terms of processing, one or more lysine residues are methylated.

Functionally, forms part of the ribosomal stalk which helps the ribosome interact with GTP-bound translation factors. The chain is Large ribosomal subunit protein uL11 from Idiomarina loihiensis (strain ATCC BAA-735 / DSM 15497 / L2-TR).